The primary structure comprises 271 residues: Formamidopyrimidine-DNA glycosylase (271 aa).

Proline 2 serves as the catalytic Schiff-base intermediate with DNA. Catalysis depends on glutamate 3, which acts as the Proton donor. Catalysis depends on lysine 58, which acts as the Proton donor; for beta-elimination activity. The DNA site is built by histidine 91, arginine 110, and arginine 152. The FPG-type zinc finger occupies 237–271 (SIYGKKGRPCPKCGSAIRMMRLGGRSTFFCPLCQK). The Proton donor; for delta-elimination activity role is filled by arginine 261.

The protein belongs to the FPG family. As to quaternary structure, monomer. Zn(2+) serves as cofactor.

It catalyses the reaction Hydrolysis of DNA containing ring-opened 7-methylguanine residues, releasing 2,6-diamino-4-hydroxy-5-(N-methyl)formamidopyrimidine.. It carries out the reaction 2'-deoxyribonucleotide-(2'-deoxyribose 5'-phosphate)-2'-deoxyribonucleotide-DNA = a 3'-end 2'-deoxyribonucleotide-(2,3-dehydro-2,3-deoxyribose 5'-phosphate)-DNA + a 5'-end 5'-phospho-2'-deoxyribonucleoside-DNA + H(+). Involved in base excision repair of DNA damaged by oxidation or by mutagenic agents. Acts as a DNA glycosylase that recognizes and removes damaged bases. Has a preference for oxidized purines, such as 7,8-dihydro-8-oxoguanine (8-oxoG). Has AP (apurinic/apyrimidinic) lyase activity and introduces nicks in the DNA strand. Cleaves the DNA backbone by beta-delta elimination to generate a single-strand break at the site of the removed base with both 3'- and 5'-phosphates. This chain is Formamidopyrimidine-DNA glycosylase, found in Geotalea daltonii (strain DSM 22248 / JCM 15807 / FRC-32) (Geobacter daltonii).